Here is a 428-residue protein sequence, read N- to C-terminus: Glutamate-1-semialdehyde 2,1-aminomutase (428 aa).

Lysine 265 carries the post-translational modification N6-(pyridoxal phosphate)lysine.

This sequence belongs to the class-III pyridoxal-phosphate-dependent aminotransferase family. HemL subfamily. In terms of assembly, homodimer. Requires pyridoxal 5'-phosphate as cofactor.

The protein localises to the cytoplasm. It carries out the reaction (S)-4-amino-5-oxopentanoate = 5-aminolevulinate. The protein operates within porphyrin-containing compound metabolism; protoporphyrin-IX biosynthesis; 5-aminolevulinate from L-glutamyl-tRNA(Glu): step 2/2. This is Glutamate-1-semialdehyde 2,1-aminomutase from Shewanella woodyi (strain ATCC 51908 / MS32).